Consider the following 148-residue polypeptide: Large-conductance mechanosensitive channel (148 aa).

2 helical membrane-spanning segments follow: residues 9-29 (AFAVKGNVVDMAVGIIIGAAF) and 79-99 (IQTVIDFIIVAFAIFMGVKAI).

The protein belongs to the MscL family. In terms of assembly, homopentamer.

Its subcellular location is the cell inner membrane. Its function is as follows. Channel that opens in response to stretch forces in the membrane lipid bilayer. May participate in the regulation of osmotic pressure changes within the cell. The protein is Large-conductance mechanosensitive channel of Pseudomonas syringae pv. tomato (strain ATCC BAA-871 / DC3000).